The following is a 518-amino-acid chain: 2-isopropylmalate synthase (518 aa).

The region spanning 4–266 (INFFDTTLRD…ESTIQLNEIK (263 aa)) is the Pyruvate carboxyltransferase domain. Mn(2+) is bound by residues D13, H201, H203, and N237. Residues 391-518 (DFISLQVHYG…GLSKQAAVGS (128 aa)) form a regulatory domain region.

It belongs to the alpha-IPM synthase/homocitrate synthase family. LeuA type 1 subfamily. Homodimer. Mn(2+) serves as cofactor.

The protein resides in the cytoplasm. The catalysed reaction is 3-methyl-2-oxobutanoate + acetyl-CoA + H2O = (2S)-2-isopropylmalate + CoA + H(+). It participates in amino-acid biosynthesis; L-leucine biosynthesis; L-leucine from 3-methyl-2-oxobutanoate: step 1/4. Catalyzes the condensation of the acetyl group of acetyl-CoA with 3-methyl-2-oxobutanoate (2-ketoisovalerate) to form 3-carboxy-3-hydroxy-4-methylpentanoate (2-isopropylmalate). This chain is 2-isopropylmalate synthase, found in Bacillus licheniformis (strain ATCC 14580 / DSM 13 / JCM 2505 / CCUG 7422 / NBRC 12200 / NCIMB 9375 / NCTC 10341 / NRRL NRS-1264 / Gibson 46).